The sequence spans 241 residues: Thiamine import ATP-binding protein ThiQ (241 aa).

Residues 2-239 enclose the ABC transporter domain; sequence IQLDKLNHCY…PKDEVLIQYL (238 aa). ATP is bound at residue 41–48; that stretch reads GPSGAGKS.

It belongs to the ABC transporter superfamily. Thiamine importer (TC 3.A.1.19.1) family. In terms of assembly, the complex is composed of two ATP-binding proteins (ThiQ), two transmembrane proteins (ThiP) and a solute-binding protein (ThiB).

It localises to the cell inner membrane. The enzyme catalyses thiamine(out) + ATP + H2O = thiamine(in) + ADP + phosphate + H(+). Its function is as follows. Part of the ABC transporter complex ThiBPQ involved in thiamine import. Responsible for energy coupling to the transport system. In Photobacterium profundum (strain SS9), this protein is Thiamine import ATP-binding protein ThiQ.